Here is a 1194-residue protein sequence, read N- to C-terminus: DNA polymerase catalytic subunit (1194 aa).

The protein belongs to the DNA polymerase type-B family. As to quaternary structure, forms a complex with the ssDNA-binding protein, the DNA polymerase processivity factor, and the alkaline exonuclease. Interacts with the helicase-primase complex composed of the primase, the helicase and the primase-associated factor; this interaction may coordinate leading and lagging strand DNA synthesis at the replication fork.

It localises to the host nucleus. The catalysed reaction is DNA(n) + a 2'-deoxyribonucleoside 5'-triphosphate = DNA(n+1) + diphosphate. The enzyme catalyses Endonucleolytic cleavage to 5'-phosphomonoester.. In terms of biological role, replicates viral genomic DNA. The replication complex is composed of six viral proteins: the DNA polymerase, processivity factor, primase, primase-associated factor, helicase, and ssDNA-binding protein. Additionally, the polymerase contains an intrinsic ribonuclease H (RNase H) activity that specifically degrades RNA/DNA heteroduplexes or duplex DNA substrates in the 5' to 3' direction. Therefore, it can catalyze the excision of the RNA primers that initiate the synthesis of Okazaki fragments at a replication fork during viral DNA replication. The protein is DNA polymerase catalytic subunit of Varicella-zoster virus (strain Oka vaccine) (HHV-3).